Reading from the N-terminus, the 522-residue chain is Lysine--tRNA ligase (522 aa).

Residues 44–52 carry the 'HIGH' region motif; it reads PSGLPHIGT. The 'KMSKS' region signature appears at 290 to 294; it reads KISKS. Lys293 contacts ATP.

It belongs to the class-I aminoacyl-tRNA synthetase family.

The protein localises to the cytoplasm. The catalysed reaction is tRNA(Lys) + L-lysine + ATP = L-lysyl-tRNA(Lys) + AMP + diphosphate. The chain is Lysine--tRNA ligase from Rickettsia conorii (strain ATCC VR-613 / Malish 7).